The chain runs to 582 residues: Aspartate--tRNA(Asp/Asn) ligase (582 aa).

Glu-177 contacts L-aspartate. An aspartate region spans residues 201–204 (QLFK). Arg-223 provides a ligand contact to L-aspartate. Residues 223–225 (RDE) and Gln-232 each bind ATP. His-447 contacts L-aspartate. Residue Glu-481 participates in ATP binding. Arg-488 serves as a coordination point for L-aspartate. 533 to 536 (GLDR) contacts ATP.

This sequence belongs to the class-II aminoacyl-tRNA synthetase family. Type 1 subfamily. In terms of assembly, homodimer.

The protein resides in the cytoplasm. The catalysed reaction is tRNA(Asx) + L-aspartate + ATP = L-aspartyl-tRNA(Asx) + AMP + diphosphate. Functionally, aspartyl-tRNA synthetase with relaxed tRNA specificity since it is able to aspartylate not only its cognate tRNA(Asp) but also tRNA(Asn). Reaction proceeds in two steps: L-aspartate is first activated by ATP to form Asp-AMP and then transferred to the acceptor end of tRNA(Asp/Asn). This is Aspartate--tRNA(Asp/Asn) ligase from Chlamydia trachomatis serovar A (strain ATCC VR-571B / DSM 19440 / HAR-13).